A 151-amino-acid polypeptide reads, in one-letter code: Large ribosomal subunit protein bL17 (151 aa).

This sequence belongs to the bacterial ribosomal protein bL17 family. In terms of assembly, part of the 50S ribosomal subunit. Contacts protein L32.

The polypeptide is Large ribosomal subunit protein bL17 (Chlorobium limicola (strain DSM 245 / NBRC 103803 / 6330)).